The sequence spans 282 residues: 2,3,4,5-tetrahydropyridine-2,6-dicarboxylate N-succinyltransferase (282 aa).

Residues Arg109 and Asp146 each coordinate substrate.

Belongs to the transferase hexapeptide repeat family. Homotrimer.

Its subcellular location is the cytoplasm. The enzyme catalyses (S)-2,3,4,5-tetrahydrodipicolinate + succinyl-CoA + H2O = (S)-2-succinylamino-6-oxoheptanedioate + CoA. It participates in amino-acid biosynthesis; L-lysine biosynthesis via DAP pathway; LL-2,6-diaminopimelate from (S)-tetrahydrodipicolinate (succinylase route): step 1/3. The sequence is that of 2,3,4,5-tetrahydropyridine-2,6-dicarboxylate N-succinyltransferase from Bartonella quintana (strain Toulouse) (Rochalimaea quintana).